The following is a 258-amino-acid chain: UPF0246 protein YPK_3600 (258 aa).

This sequence belongs to the UPF0246 family.

The protein is UPF0246 protein YPK_3600 of Yersinia pseudotuberculosis serotype O:3 (strain YPIII).